The following is a 140-amino-acid chain: Ribosomal RNA large subunit methyltransferase H (140 aa).

S-adenosyl-L-methionine contacts are provided by L55 and G87.

This sequence belongs to the RNA methyltransferase RlmH family. In terms of assembly, homodimer.

The protein resides in the cytoplasm. The catalysed reaction is pseudouridine(1915) in 23S rRNA + S-adenosyl-L-methionine = N(3)-methylpseudouridine(1915) in 23S rRNA + S-adenosyl-L-homocysteine + H(+). Specifically methylates the pseudouridine at position 1915 (m3Psi1915) in 23S rRNA. This chain is Ribosomal RNA large subunit methyltransferase H, found in Erythrobacter litoralis (strain HTCC2594).